We begin with the raw amino-acid sequence, 151 residues long: Large ribosomal subunit protein uL15 (151 aa).

Residues 1-45 (MNLSSLKPVKGSTKTCKRVGRGQGSGCGGTSTRGHKGQKSRSGYS) are disordered. A compositionally biased stretch (gly residues) spans 21-31 (RGQGSGCGGTS).

Belongs to the universal ribosomal protein uL15 family. As to quaternary structure, part of the 50S ribosomal subunit.

Functionally, binds to the 23S rRNA. The chain is Large ribosomal subunit protein uL15 from Azobacteroides pseudotrichonymphae genomovar. CFP2.